Here is a 60-residue protein sequence, read N- to C-terminus: Large ribosomal subunit protein bL32 (60 aa).

It belongs to the bacterial ribosomal protein bL32 family.

The protein is Large ribosomal subunit protein bL32 of Thermosipho africanus (strain TCF52B).